Here is a 682-residue protein sequence, read N- to C-terminus: Epithelial sodium channel subunit alpha (682 aa).

Residues 1-111 (MLMRLLPLPS…CSKHNRMKTA (111 aa)) are Cytoplasmic-facing. The tract at residues 34–69 (AQGPLPPQPLQGPLKGDKCEQPGLGPEPTAPQQHTE) is disordered. Residues 112-132 (FWAVLWLCTFGMMYWQFALLF) form a helical membrane-spanning segment. Residues 133 to 586 (GEYFSYPVSL…SQWSLWFGSS (454 aa)) lie on the Extracellular side of the membrane. 10 disulfide bridges follow: Cys159–Cys329, Cys253–Cys260, Cys306–Cys313, Cys418–Cys503, Cys440–Cys480, Cys440–Cys499, Cys444–Cys495, Cys453–Cys480, Cys453–Cys503, and Cys455–Cys469. A glycan (N-linked (GlcNAc...) asparagine) is linked at Asn191. The segment at 201–267 (RSRRSLADTL…SDCFYQTSSS (67 aa)) is gating release of inhibition by proteolysis (GRIP); protease-sensitive region that is responsible for the proteolytic activation of the channel. Residues 221–240 (PEPRRARSSDPSSVRDNNPR) are disordered. Residue Asn504 is glycosylated (N-linked (GlcNAc...) asparagine). A helical transmembrane segment spans residues 587-607 (VLSVVEMAEFMFDLLVITLLM). Residues 608-682 (LLRRFRSRYW…SSAACAPREP (75 aa)) lie on the Cytoplasmic side of the membrane. The PY motif; recruits WW domain-containing proteins and is thereby required for ubiquitination and inhibition of the channel by NEDD4 and NEDD4L motif lies at 653–657 (PPPAY).

Belongs to the amiloride-sensitive sodium channel (TC 1.A.6) family. SCNN1A subfamily. In terms of assembly, heterotrimer; containing an alpha/SCNN1A, a beta/SCNN1B and a gamma/SCNN1G subunit. Interacts with WWP1 (via WW domains). Interacts with WWP2 (via WW domains); inhibits the channel. Interacts with BPIFA1; the interaction is indirect via SCNN1B and inhibits the proteolytic processing of SCNN1A and SCNN1G and the activation of ENaC. Interacts with the full-length immature form of PCSK9 (pro-PCSK9). Ubiquitinated. Can be ubiquitinated at multiple sites and undergo monoubiquitination and polyubiquitination. Ubiquitination by NEDD4 or NEDD4L inhibits the ENaC channel through endocytosis, intracellular retention and degradation of its individual subunits. In terms of processing, N-glycosylated. Post-translationally, ENaC is activated through the proteolytic maturation of its subunits. Furin cleaves the SCNN1A subunit, which results in a stepwise increase in the open probability of the channel due to the release of an inhibitory tract. BPIFA1, which is recruited by the SCNN1B subunit, prevents the proteolytic activation of ENaC.

The protein localises to the apical cell membrane. Its subcellular location is the cell projection. It is found in the cilium. It localises to the cytoplasmic granule. The protein resides in the cytoplasm. The protein localises to the cytoplasmic vesicle. Its subcellular location is the secretory vesicle. It is found in the acrosome. It localises to the flagellum. The catalysed reaction is Na(+)(in) = Na(+)(out). Its activity is regulated as follows. Originally identified and characterized by its inhibition by the diuretic drug amiloride. In terms of biological role, this is one of the three pore-forming subunits of the heterotrimeric epithelial sodium channel (ENaC), a critical regulator of sodium balance and fluid homeostasis. ENaC operates in epithelial tissues, where it mediates the electrodiffusion of sodium ions from extracellular fluid through the apical membrane of cells, with water following osmotically. It plays a key role in maintaining sodium homeostasis through electrogenic sodium reabsorption in the kidneys. Additionally, ENaC is essential for airway surface liquid homeostasis, which is crucial for proper mucus clearance. The polypeptide is Epithelial sodium channel subunit alpha (Cavia porcellus (Guinea pig)).